Here is a 940-residue protein sequence, read N- to C-terminus: UvrABC system protein A (940 aa).

31–38 (GLSGSGKS) provides a ligand contact to ATP. A C4-type zinc finger spans residues 253-280 (CPICGYSMRELEPRLFSFNNPAGACPTC). ABC transporter domains lie at 310 to 587 (WDRR…PESL) and 607 to 937 (ANPE…RFLK). 640 to 647 (GVSGSGKS) is an ATP binding site. The segment at 740-766 (CEACQGDGVIKVEMHFLPDIYVPCDQC) adopts a C4-type zinc-finger fold.

It belongs to the ABC transporter superfamily. UvrA family. Forms a heterotetramer with UvrB during the search for lesions.

It is found in the cytoplasm. Its function is as follows. The UvrABC repair system catalyzes the recognition and processing of DNA lesions. UvrA is an ATPase and a DNA-binding protein. A damage recognition complex composed of 2 UvrA and 2 UvrB subunits scans DNA for abnormalities. When the presence of a lesion has been verified by UvrB, the UvrA molecules dissociate. Functionally, plays a role in recovery after DNA ADP-ribosylation. The polypeptide is UvrABC system protein A (Escherichia coli O127:H6 (strain E2348/69 / EPEC)).